The following is a 519-amino-acid chain: Cyclic AMP-responsive element-binding protein 3-like protein 1 (519 aa).

The tract at residues 1–60 is required for transcriptional activation; it reads MDAVLEPFPADRLFPGSSFLDLGDLNESDFLNNAHFPEHLDHFTENMEDFSNDLFSSFFD. The Cytoplasmic segment spans residues 1-374; it reads MDAVLEPFPA…YKMAATQTGT (374 aa). The interval 71–98 is disordered; the sequence is LDMELDSPTPGIQAEHSYSLSGDSAPQS. The span at 86–97 shows a compositional bias: polar residues; it reads HSYSLSGDSAPQ. Lys-184 participates in a covalent cross-link: Glycyl lysine isopeptide (Lys-Gly) (interchain with G-Cter in SUMO2). Residues 200–259 are disordered; it reads DLVQMPPTPPSSHGSDSDGSQSPRSLPPSSPVRPMARSSTAISTSPLLTAPHKLQGTSGP. Low complexity predominate over residues 210-223; it reads SSHGSDSDGSQSPR. Polar residues predominate over residues 236–246; that stretch reads RSSTAISTSPL. Residues 290-353 enclose the bZIP domain; sequence ALKRVRRKIK…RTLLQQLQKL (64 aa). The segment at 292 to 321 is basic motif; the sequence is KRVRRKIKNKISAQESRRKKKEYVECLEKK. The tract at residues 332–353 is leucine-zipper; sequence LWKKVETLENANRTLLQQLQKL. The chain crosses the membrane as a helical; Signal-anchor for type II membrane protein span at residues 375 to 395; that stretch reads CLMVAALCFVLVLGSLVPCLP. An MBTPS2 recognition motif is present at residues 392–395; it reads PCLP. The Lumenal segment spans residues 396-519; the sequence is EFSSGSQTVK…LGPNTTIKLS (124 aa). Positions 423–426 match the MBTPS1 recognition motif; sequence RSLL. A disordered region spans residues 484-519; sequence EAWPKDGGNGTSPDFSHSKEWFHDRDLGPNTTIKLS. N-linked (GlcNAc...) asparagine glycosylation occurs at Asn-492. Residues 499–510 are compositionally biased toward basic and acidic residues; it reads SHSKEWFHDRDL. N-linked (GlcNAc...) asparagine glycosylation is present at Asn-513.

Belongs to the bZIP family. ATF subfamily. As to quaternary structure, interacts with SMAD4, the interaction takes place upon TGFB1 induction and SMAD4 acts as a CREB3L1 coactivator to induce the expression of genes involved in assembly of collagen extracellular matrix. In terms of processing, upon ER stress or DNA damage, translocated to the Golgi apparatus, where it is processed by regulated intramembrane proteolysis (RIP) to release the cytosol-facing N-terminal transcription factor domain. The cleavage is performed sequentially by site-1 and site-2 proteases (S1P/MBTPS1 and S2P/MBTPS2). RIP is induced by TGFB1 and ceramide. Post-translationally, N-glycosylated. Ubiquitinated by HRD1/SYVN1; undergoes 'Lys-48'-linked ubiquitination, followed by rapid proteasomal degradation under normal conditions. Upon ER stress, SYVN1 E3 ubiquitin-protein ligase dissociates from its substrate, ubiquitination does not occur and CREB3L1 is stabilized. In terms of tissue distribution, expressed in several tissues, with highest levels in pancreas and prostate. Expressed at relatively lower levels in brain.

The protein localises to the endoplasmic reticulum membrane. The protein resides in the nucleus. Functionally, precursor of the transcription factor form (Processed cyclic AMP-responsive element-binding protein 3-like protein 1), which is embedded in the endoplasmic reticulum membrane with N-terminal DNA-binding and transcription activation domains oriented toward the cytosolic face of the membrane. In response to ER stress or DNA damage, transported to the Golgi, where it is cleaved in a site-specific manner by resident proteases S1P/MBTPS1 and S2P/MBTPS2. The released N-terminal cytosolic domain is translocated to the nucleus where it activates transcription of specific target genes involved in the cell-cycle progression inhibition. Transcription factor involved in cell type specific DNA damage and unfolded protein response (UPR). Binds the DNA consensus sequence 5'-GTGXGCXGC-3'. Plays a critical role in bone formation through the transcription of COL1A1, and possibly COL1A2, and the secretion of bone matrix proteins. Directly binds to the UPR element (UPRE)-like sequence in an osteoblast-specific COL1A1 promoter region and induces its transcription. Does not regulate COL1A1 in other tissues, such as skin. Required to protect astrocytes from ER stress-induced cell death. In astrocytes, binds to the cAMP response element (CRE) of the BiP/HSPA5 promoter and participate in its transcriptional activation. In astrocytes and osteoblasts, upon DNA damage, inhibits cell-cycle progression after G2/M phase by binding to promoters and activating transcription of genes encoding cell-cycle inhibitors, such as p21/CDKN1A. Required for TGFB1 to activate genes involved in the assembly of collagen extracellular matrix. In terms of biological role, (Microbial infection) May play a role in limiting virus spread by inhibiting proliferation of virus-infected cells. Upon infection with diverse DNA and RNA viruses, inhibits cell-cycle progression by binding to promoters and activating transcription of genes encoding cell-cycle inhibitors, such as p21/CDKN1A. The sequence is that of Cyclic AMP-responsive element-binding protein 3-like protein 1 from Homo sapiens (Human).